Here is a 391-residue protein sequence, read N- to C-terminus: GATA-binding factor 6-A (391 aa).

The tract at residues 57–111 (GAHSVNSHWSQATSESSSFNNSSPHTSSRYHYPPSPPMHNGSTRDTGYSSSLTVS) is disordered. Residues 66–83 (SQATSESSSFNNSSPHTS) show a composition bias toward low complexity. Positions 96–111 (NGSTRDTGYSSSLTVS) are enriched in polar residues. GATA-type zinc fingers lie at residues 182–206 (CVNC…CNAC) and 236–260 (CANC…CNAC). The interval 274 to 355 (AMKKEGIQTR…TESTSPNSNT (82 aa)) is disordered. Over residues 282 to 291 (TRKRKPKTLN) the composition is skewed to basic residues. The span at 292–319 (KSKSSSSNGNSSHQISMTPTSTTSSTNS) shows a compositional bias: low complexity. Positions 326 to 355 (GSPSQNTTPVVASSLMSTQQTESTSPNSNT) are enriched in polar residues.

In embryos, expressed in the presumptive heart mesoderm. In adults, expressed at high levels in heart, small intestine, and stomach and at lower levels in lung, pancreas and colon.

The protein localises to the nucleus. Functionally, transcriptional activator that binds 5'-GATA-3'-containing motifs within gene promoters. Regulates cardiac-specific transcription during embryogenesis and thereby cardiogenesis. In Xenopus laevis (African clawed frog), this protein is GATA-binding factor 6-A (gata6-a).